A 243-amino-acid polypeptide reads, in one-letter code: Proteasome subunit beta 1 (243 aa).

The segment covering Met-1–Val-14 has biased composition (polar residues). The segment at Met-1 to Asn-34 is disordered. A propeptide spans Met-1 to Gly-48 (removed in mature form; by autocatalysis). The active-site Nucleophile is Thr-49.

This sequence belongs to the peptidase T1B family. The 20S proteasome core is composed of 14 alpha and 14 beta subunits that assemble into four stacked heptameric rings, resulting in a barrel-shaped structure. The two inner rings, each composed of seven catalytic beta subunits, are sandwiched by two outer rings, each composed of seven alpha subunits. The catalytic chamber with the active sites is on the inside of the barrel. Has a gated structure, the ends of the cylinder being occluded by the N-termini of the alpha-subunits. Is capped at one or both ends by the proteasome regulatory ATPase, PAN.

The protein localises to the cytoplasm. The enzyme catalyses Cleavage of peptide bonds with very broad specificity.. The formation of the proteasomal ATPase PAN-20S proteasome complex, via the docking of the C-termini of PAN into the intersubunit pockets in the alpha-rings, triggers opening of the gate for substrate entry. Interconversion between the open-gate and close-gate conformations leads to a dynamic regulation of the 20S proteasome proteolysis activity. Its function is as follows. Component of the proteasome core, a large protease complex with broad specificity involved in protein degradation. The sequence is that of Proteasome subunit beta 1 from Haloterrigena turkmenica (strain ATCC 51198 / DSM 5511 / JCM 9101 / NCIMB 13204 / VKM B-1734 / 4k) (Halococcus turkmenicus).